Consider the following 316-residue polypeptide: Pantothenate kinase (316 aa).

95 to 102 is an ATP binding site; sequence GSVAVGKS.

Belongs to the prokaryotic pantothenate kinase family.

Its subcellular location is the cytoplasm. It carries out the reaction (R)-pantothenate + ATP = (R)-4'-phosphopantothenate + ADP + H(+). The protein operates within cofactor biosynthesis; coenzyme A biosynthesis; CoA from (R)-pantothenate: step 1/5. This Salmonella agona (strain SL483) protein is Pantothenate kinase.